Consider the following 174-residue polypeptide: Gamma-crystallin D (174 aa).

Beta/gamma crystallin 'Greek key' domains follow at residues 2 to 40 and 41 to 83; these read GKIT…RVDS and GCWM…RLIP. A connecting peptide region spans residues 84-87; sequence HSGS. 2 consecutive Beta/gamma crystallin 'Greek key' domains span residues 88–128 and 129–171; these read HRIR…NVLE and GSWV…RRVI.

It belongs to the beta/gamma-crystallin family. Monomer.

Functionally, crystallins are the dominant structural components of the vertebrate eye lens. This is Gamma-crystallin D (CRYGD) from Homo sapiens (Human).